Reading from the N-terminus, the 277-residue chain is Probable septum site-determining protein MinC (277 aa).

The disordered stretch occupies residues 107–168; the sequence is TEGLLPGRKG…ESGPQVSHYD (62 aa). The segment covering 122–142 has biased composition (basic and acidic residues); sequence GKPDGKAAEGRAPDHGTEGRA.

Belongs to the MinC family. As to quaternary structure, interacts with MinD and FtsZ.

In terms of biological role, cell division inhibitor that blocks the formation of polar Z ring septums. Rapidly oscillates between the poles of the cell to destabilize FtsZ filaments that have formed before they mature into polar Z rings. Prevents FtsZ polymerization. In Mesorhizobium japonicum (strain LMG 29417 / CECT 9101 / MAFF 303099) (Mesorhizobium loti (strain MAFF 303099)), this protein is Probable septum site-determining protein MinC.